The primary structure comprises 110 residues: MRALKMNSISVSVTHGLIFSTLLFVISVAGIIINRRNILILLMSIELMLLAVNTNFLIFANMHQQAMGGVFVFFIMAVAAAETAIGLAIVVAIFRKRKTIDLSKLNTLRG.

Helical transmembrane passes span 13–33 (VTHGLIFSTLLFVISVAGIII), 38–58 (ILILLMSIELMLLAVNTNFLI), and 70–90 (VFVFFIMAVAAAETAIGLAIV).

It belongs to the complex I subunit 4L family. NDH-1 is composed of 14 different subunits. Subunits NuoA, H, J, K, L, M, N constitute the membrane sector of the complex.

The protein localises to the cell inner membrane. It catalyses the reaction a quinone + NADH + 5 H(+)(in) = a quinol + NAD(+) + 4 H(+)(out). Its function is as follows. NDH-1 shuttles electrons from NADH, via FMN and iron-sulfur (Fe-S) centers, to quinones in the respiratory chain. The immediate electron acceptor for the enzyme in this species is believed to be ubiquinone. Couples the redox reaction to proton translocation (for every two electrons transferred, four hydrogen ions are translocated across the cytoplasmic membrane), and thus conserves the redox energy in a proton gradient. This chain is NADH-quinone oxidoreductase subunit K, found in Francisella tularensis subsp. tularensis (strain FSC 198).